A 620-amino-acid chain; its full sequence is Eukaryotic translation initiation factor 2-alpha kinase 1 (620 aa).

The disordered stretch occupies residues 1–38 (MLGGGSVDGERDTDDDAAGAVAAPPAIDFPAEVSDPKY). Over residues 18-28 (AGAVAAPPAID) the composition is skewed to low complexity. The short motif at 85-104 (LHSKQVFKLLCQTFIKMGLL) is the SIFI-degron element. Residues 167–581 (FEELAILGKG…ALQLLQSELF (415 aa)) enclose the Protein kinase domain. Residues 173-181 (LGKGGYGRV) and Lys196 each bind ATP. Position 283 is a phosphothreonine (Thr283). The stretch at 408-413 (ACPYVM) is one HRM 1 repeat. Asp440 functions as the Proton acceptor in the catalytic mechanism. Phosphothreonine; by autocatalysis is present on residues Thr484 and Thr486. A Phosphothreonine modification is found at Thr491. Residues 550–555 (RCPVQA) form an HRM 2 repeat.

This sequence belongs to the protein kinase superfamily. Ser/Thr protein kinase family. GCN2 subfamily. Synthesized in an inactive form that binds to the N-terminal domain of CDC37. Has to be associated with a multiprotein complex containing Hsp90, CDC37 and PPP5C for maturation and activation by autophosphorylation. The phosphatase PPP5C modulates this activation. Homodimer; homodimerizes in presence of heme, forming a disulfide-linked inactive homodimer. Interacts with DELE1; binds both to full-length DELE1 and processed form of DELE1 (S-DELE1) in response to stress, leading to activate its protein kinase activity and trigger the integrated stress response (ISR). Post-translationally, activated by autophosphorylation; phosphorylated predominantly on serine and threonine residues, but also on tyrosine residues. Autophosphorylation at Thr-486 is required for kinase activation. The active autophosphorylated form apparently is largely refractory to cellular heme fluctuations. In terms of processing, ubiquitinated and degraded by the SIFI complex once the mitochondrial stress has been resolved, thereby providing stress response silencing. Within the SIFI complex, UBR4 initiates ubiquitin chain that are further elongated or branched by KCMF1.

It is found in the cytoplasm. The enzyme catalyses L-seryl-[protein] + ATP = O-phospho-L-seryl-[protein] + ADP + H(+). The catalysed reaction is L-threonyl-[protein] + ATP = O-phospho-L-threonyl-[protein] + ADP + H(+). Its activity is regulated as follows. In normal conditions, the protein kinase activity is inhibited; inhibition is relieved by various stress conditions. Inhibited by heme: in presence of heme, forms a disulfide-linked inactive homodimer. Heme depletion relieves inhibition and stimulates kinase activity by autophosphorylation. Inhibited by the heme metabolites biliverdin and bilirubin. Induced by oxidative stress generated by arsenite treatment. Binding of nitric oxide (NO) to the heme iron in the N-terminal heme-binding domain activates the kinase activity, while binding of carbon monoxide (CO) suppresses kinase activity. Protein kinase activity is also activated upon binding to DELE1 in response to various stress, triggering the integrated stress response (ISR): activated by full-length DELE1 in response to iron deficiency, while it is activated by the processed form of DELE1 (S-DELE1) in response to mitochondrial stress. Metabolic-stress sensing protein kinase that phosphorylates the alpha subunit of eukaryotic translation initiation factor 2 (EIF2S1/eIF-2-alpha) in response to various stress conditions. Key activator of the integrated stress response (ISR) required for adaptation to various stress, such as heme deficiency, oxidative stress, osmotic shock, mitochondrial dysfunction and heat shock. EIF2S1/eIF-2-alpha phosphorylation in response to stress converts EIF2S1/eIF-2-alpha in a global protein synthesis inhibitor, leading to a global attenuation of cap-dependent translation, while concomitantly initiating the preferential translation of ISR-specific mRNAs, such as the transcriptional activator ATF4, and hence allowing ATF4-mediated reprogramming. Acts as a key sensor of heme-deficiency: in normal conditions, binds hemin via a cysteine thiolate and histidine nitrogenous coordination, leading to inhibit the protein kinase activity. This binding occurs with moderate affinity, allowing it to sense the heme concentration within the cell: heme depletion relieves inhibition and stimulates kinase activity, activating the ISR. Thanks to this unique heme-sensing capacity, plays a crucial role to shut off protein synthesis during acute heme-deficient conditions. In red blood cells (RBCs), controls hemoglobin synthesis ensuring a coordinated regulation of the synthesis of its heme and globin moieties. It thereby plays an essential protective role for RBC survival in anemias of iron deficiency. Iron deficiency also triggers activation by full-length DELE1. Also activates the ISR in response to mitochondrial dysfunction: HRI/EIF2AK1 protein kinase activity is activated upon binding to the processed form of DELE1 (S-DELE1), thereby promoting the ATF4-mediated reprogramming. Also acts as an activator of mitophagy in response to mitochondrial damage: catalyzes phosphorylation of eIF-2-alpha (EIF2S1) following activation by S-DELE1, thereby promoting mitochondrial localization of EIF2S1, triggering PRKN-independent mitophagy. The polypeptide is Eukaryotic translation initiation factor 2-alpha kinase 1 (Rattus norvegicus (Rat)).